The primary structure comprises 504 residues: Occludin (504 aa).

Residues 1–57 (MFSKKSYDGPPAGYGPPTGYGAPTADYGYGSPPPGSYYVDDAPQLFYKWTSPPGAVR) are Cytoplasmic-facing. Residues 51 to 253 (SPPGAVRGLQ…ICFFAQKTRS (203 aa)) enclose the MARVEL domain. A helical membrane pass occupies residues 58–80 (GLQAGVLVLCIAIFACVASTLAW). Topologically, residues 81-123 (DYGYGLGGAYGTGLGGFYGSNYYGSGLSYSYGYGGYYGGVNQR) are extracellular. The chain crosses the membrane as a helical span at residues 124-148 (TANGFMIAMAVLCFLAQLGLLVAAL). The Cytoplasmic portion of the chain corresponds to 149–158 (SKSGATRSRR). The chain crosses the membrane as a helical span at residues 159 to 183 (FYLAVLVLSAVLAFVMLIASIVYIM). The Extracellular portion of the chain corresponds to 184–227 (GVNPQAQMSSGYYYSPLLAMCSQAYGSTYLNQYIYHYCTVDPQE). Cysteines 204 and 221 form a disulfide. The chain crosses the membrane as a helical span at residues 228–249 (AVAAVCGFLIVILLCLICFFAQ). Topologically, residues 250-504 (KTRSKIWRYG…MVSAYDKVRG (255 aa)) are cytoplasmic. The disordered stretch occupies residues 324–396 (PSGTYSSRGD…VESSDERDQE (73 aa)). Basic residues predominate over residues 361–370 (PARRGRRRRR). 2 positions are modified to phosphotyrosine: Tyr-379 and Tyr-383. The tract at residues 379-385 (YETDYTT) is interaction with TJP1. The OCEL domain occupies 396–504 (EQWASLYPPI…MVSAYDKVRG (109 aa)). The stretch at 412 to 471 (QRYKQEFDTDLKRYKQLCAEMDSINDRLNQLSRRLDSITEDSPQYQDVAEEYNQLKDLKR) forms a coiled coil.

It belongs to the ELL/occludin family. In terms of assembly, interacts with TJP1 and TJP3. Post-translationally, phosphorylated. As to expression, localized at tight junctions of both epithelial and endothelial cells. Highly expressed in lung and liver. Expressed at a lower level in brain.

It localises to the cell membrane. The protein localises to the cell junction. It is found in the tight junction. Its function is as follows. May play a role in the formation and regulation of the tight junction (TJ) paracellular permeability barrier. Interacts with ZO-1. The polypeptide is Occludin (OCLN) (Gallus gallus (Chicken)).